The primary structure comprises 328 residues: Putative potassium channel protein YugO (328 aa).

Helical transmembrane passes span 19-39, 42-62, and 73-93; these read IGVI…ILEP, FTSV…VGYG, and AAGI…FATL. The 125-residue stretch at 114–238 folds into the RCK N-terminal domain; the sequence is RDHIILIGWN…ERAGANQIIG (125 aa).

It localises to the cell membrane. The protein is Putative potassium channel protein YugO (yugO) of Bacillus subtilis (strain 168).